Here is a 258-residue protein sequence, read N- to C-terminus: Regulatory protein RecX (258 aa).

Belongs to the RecX family.

Its subcellular location is the cytoplasm. Its function is as follows. Modulates RecA activity. This is Regulatory protein RecX from Streptococcus equi subsp. equi (strain 4047).